We begin with the raw amino-acid sequence, 81 residues long: Photosystem I iron-sulfur center (81 aa).

2 consecutive 4Fe-4S ferredoxin-type domains span residues Ser-2–Trp-31 and Ile-39–Tyr-68. [4Fe-4S] cluster is bound by residues Cys-11, Cys-14, Cys-17, Cys-21, Cys-48, Cys-51, Cys-54, and Cys-58.

As to quaternary structure, the eukaryotic PSI reaction center is composed of at least 11 subunits. [4Fe-4S] cluster serves as cofactor.

The protein localises to the plastid. The protein resides in the chloroplast thylakoid membrane. It carries out the reaction reduced [plastocyanin] + hnu + oxidized [2Fe-2S]-[ferredoxin] = oxidized [plastocyanin] + reduced [2Fe-2S]-[ferredoxin]. Its function is as follows. Apoprotein for the two 4Fe-4S centers FA and FB of photosystem I (PSI); essential for photochemical activity. FB is the terminal electron acceptor of PSI, donating electrons to ferredoxin. The C-terminus interacts with PsaA/B/D and helps assemble the protein into the PSI complex. Required for binding of PsaD and PsaE to PSI. PSI is a plastocyanin-ferredoxin oxidoreductase, converting photonic excitation into a charge separation, which transfers an electron from the donor P700 chlorophyll pair to the spectroscopically characterized acceptors A0, A1, FX, FA and FB in turn. The protein is Photosystem I iron-sulfur center of Drimys granadensis.